A 122-amino-acid chain; its full sequence is Large ribosomal subunit protein uL14 (122 aa).

This sequence belongs to the universal ribosomal protein uL14 family. Part of the 50S ribosomal subunit. Forms a cluster with proteins L3 and L19. In the 70S ribosome, L14 and L19 interact and together make contacts with the 16S rRNA in bridges B5 and B8.

Functionally, binds to 23S rRNA. Forms part of two intersubunit bridges in the 70S ribosome. In Clostridium perfringens (strain ATCC 13124 / DSM 756 / JCM 1290 / NCIMB 6125 / NCTC 8237 / Type A), this protein is Large ribosomal subunit protein uL14.